The following is a 514-amino-acid chain: Maturase K (514 aa).

It belongs to the intron maturase 2 family. MatK subfamily.

It localises to the plastid. It is found in the chloroplast. Functionally, usually encoded in the trnK tRNA gene intron. Probably assists in splicing its own and other chloroplast group II introns. This Dioon spinulosum (Gum palm) protein is Maturase K.